Here is a 679-residue protein sequence, read N- to C-terminus: Glycine--tRNA ligase beta subunit (679 aa).

It belongs to the class-II aminoacyl-tRNA synthetase family. As to quaternary structure, tetramer of two alpha and two beta subunits.

The protein localises to the cytoplasm. It catalyses the reaction tRNA(Gly) + glycine + ATP = glycyl-tRNA(Gly) + AMP + diphosphate. In Thermodesulfovibrio yellowstonii (strain ATCC 51303 / DSM 11347 / YP87), this protein is Glycine--tRNA ligase beta subunit.